A 301-amino-acid polypeptide reads, in one-letter code: Acetylglutamate kinase (301 aa).

Residues 68-69 (GG), Arg90, and Asn197 each bind substrate.

This sequence belongs to the acetylglutamate kinase family. ArgB subfamily.

The protein localises to the cytoplasm. The catalysed reaction is N-acetyl-L-glutamate + ATP = N-acetyl-L-glutamyl 5-phosphate + ADP. Its pathway is amino-acid biosynthesis; L-arginine biosynthesis; N(2)-acetyl-L-ornithine from L-glutamate: step 2/4. Its function is as follows. Catalyzes the ATP-dependent phosphorylation of N-acetyl-L-glutamate. The chain is Acetylglutamate kinase from Nitrosococcus oceani (strain ATCC 19707 / BCRC 17464 / JCM 30415 / NCIMB 11848 / C-107).